The following is a 586-amino-acid chain: Arrestin-related trafficking adapter 5 (586 aa).

2 disordered regions span residues Gly123–Thr145 and Glu182–Arg217. Over residues Ala126 to Thr145 the composition is skewed to polar residues. Residues Ser199–Asn216 are compositionally biased toward low complexity. Residue Lys364 forms a Glycyl lysine isopeptide (Lys-Gly) (interchain with G-Cter in ubiquitin) linkage.

This sequence belongs to the arrestin family. In terms of assembly, interacts with RSP5. In terms of processing, ubiquitinated by RSP5.

Its function is as follows. May regulate endocytosis by recruiting RSP5 ubiquitin ligase activity to specific plasma membrane proteins in response to extracellular stimuli. The polypeptide is Arrestin-related trafficking adapter 5 (ART5) (Saccharomyces cerevisiae (strain ATCC 204508 / S288c) (Baker's yeast)).